The primary structure comprises 408 residues: LL-diaminopimelate aminotransferase (408 aa).

2 residues coordinate substrate: Y15 and G42. Pyridoxal 5'-phosphate contacts are provided by residues Y72, 108–109 (SK), Y132, N187, Y218, and 246–248 (SFS). Substrate contacts are provided by K109, Y132, and N187. K249 carries the post-translational modification N6-(pyridoxal phosphate)lysine. Pyridoxal 5'-phosphate contacts are provided by R257 and N292. Substrate-binding residues include N292 and R388.

Belongs to the class-I pyridoxal-phosphate-dependent aminotransferase family. LL-diaminopimelate aminotransferase subfamily. As to quaternary structure, homodimer. Pyridoxal 5'-phosphate serves as cofactor.

It catalyses the reaction (2S,6S)-2,6-diaminopimelate + 2-oxoglutarate = (S)-2,3,4,5-tetrahydrodipicolinate + L-glutamate + H2O + H(+). It functions in the pathway amino-acid biosynthesis; L-lysine biosynthesis via DAP pathway; LL-2,6-diaminopimelate from (S)-tetrahydrodipicolinate (aminotransferase route): step 1/1. In terms of biological role, involved in the synthesis of meso-diaminopimelate (m-DAP or DL-DAP), required for both lysine and peptidoglycan biosynthesis. Catalyzes the direct conversion of tetrahydrodipicolinate to LL-diaminopimelate. This is LL-diaminopimelate aminotransferase from Synechococcus sp. (strain RCC307).